Reading from the N-terminus, the 235-residue chain is Purine nucleoside phosphorylase DeoD-type (235 aa).

H4 contacts a purine D-ribonucleoside. Residues G20, R24, R43, and 87-90 each bind phosphate; that span reads RVGT. Residues 179–181 and 203–204 each bind a purine D-ribonucleoside; these read EME and SD. The active-site Proton donor is the D204.

Belongs to the PNP/UDP phosphorylase family. As to quaternary structure, homohexamer; trimer of homodimers.

It catalyses the reaction a purine D-ribonucleoside + phosphate = a purine nucleobase + alpha-D-ribose 1-phosphate. The enzyme catalyses a purine 2'-deoxy-D-ribonucleoside + phosphate = a purine nucleobase + 2-deoxy-alpha-D-ribose 1-phosphate. Functionally, catalyzes the reversible phosphorolytic breakdown of the N-glycosidic bond in the beta-(deoxy)ribonucleoside molecules, with the formation of the corresponding free purine bases and pentose-1-phosphate. The polypeptide is Purine nucleoside phosphorylase DeoD-type (Clostridium perfringens (strain SM101 / Type A)).